The following is a 198-amino-acid chain: Probable minor pilin MMP0709 (198 aa).

Positions 1-5 (MSNRG) are excised as a propeptide. The QXSXEXXXL signature appears at 6–14 (QLSIEMVIL).

Post-translationally, the N-terminus is probably cleaved by the prepilin peptidase EppA, which recognizes the class III signal sequence.

The protein resides in the secreted. It is found in the cell surface. The protein localises to the fimbrium. This is Probable minor pilin MMP0709 from Methanococcus maripaludis (strain DSM 14266 / JCM 13030 / NBRC 101832 / S2 / LL).